Here is a 271-residue protein sequence, read N- to C-terminus: Bifunctional protein FolD (271 aa).

NADP(+)-binding positions include 154–156 (GRS), Ser-181, and Ile-222.

It belongs to the tetrahydrofolate dehydrogenase/cyclohydrolase family. In terms of assembly, homodimer.

It carries out the reaction (6R)-5,10-methylene-5,6,7,8-tetrahydrofolate + NADP(+) = (6R)-5,10-methenyltetrahydrofolate + NADPH. The enzyme catalyses (6R)-5,10-methenyltetrahydrofolate + H2O = (6R)-10-formyltetrahydrofolate + H(+). The protein operates within one-carbon metabolism; tetrahydrofolate interconversion. Functionally, catalyzes the oxidation of 5,10-methylenetetrahydrofolate to 5,10-methenyltetrahydrofolate and then the hydrolysis of 5,10-methenyltetrahydrofolate to 10-formyltetrahydrofolate. This is Bifunctional protein FolD from Thermotoga sp. (strain RQ2).